Reading from the N-terminus, the 98-residue chain is NADH-ubiquinone oxidoreductase chain 4L (98 aa).

3 consecutive transmembrane segments (helical) span residues 1-21, 29-49, and 61-81; these read MSSIYMNILLAFTMALLGLLM, SLLCLEGMMLSLFILSTVTML, and VMLMVFAACEAAVGLALLVTV.

Belongs to the complex I subunit 4L family. Core subunit of respiratory chain NADH dehydrogenase (Complex I) which is composed of 45 different subunits.

The protein resides in the mitochondrion inner membrane. The catalysed reaction is a ubiquinone + NADH + 5 H(+)(in) = a ubiquinol + NAD(+) + 4 H(+)(out). Its function is as follows. Core subunit of the mitochondrial membrane respiratory chain NADH dehydrogenase (Complex I) which catalyzes electron transfer from NADH through the respiratory chain, using ubiquinone as an electron acceptor. Part of the enzyme membrane arm which is embedded in the lipid bilayer and involved in proton translocation. The protein is NADH-ubiquinone oxidoreductase chain 4L (MT-ND4L) of Tamandua tetradactyla (Southern anteater).